A 148-amino-acid chain; its full sequence is Truncated transcription factor CAULIFLOWER D (148 aa).

The 61-residue stretch at 1-61 (MGRGRVEMKR…GKLFEYSSES (61 aa)) folds into the MADS-box domain. Positions 90-148 (QTNWSMEYSRLKAKIELWERNQRHYLGEDLESISIKELQNLEQQLDTSLKHIRSRKVCK) constitute a K-box; partial domain.

In terms of assembly, homodimer capable of binding to CArG-box sequences.

The protein localises to the nucleus. In terms of biological role, probable transcription factor that promotes early floral meristem identity in synergy with APETALA1, FRUITFULL and LEAFY. Is required subsequently for the transition of an inflorescence meristem into a floral meristem. Seems to be partially redundant to the function of APETALA1. The polypeptide is Truncated transcription factor CAULIFLOWER D (CAL-D) (Brassica oleracea var. botrytis (Cauliflower)).